Reading from the N-terminus, the 178-residue chain is Large ribosomal subunit protein uL6 (178 aa).

The protein belongs to the universal ribosomal protein uL6 family. As to quaternary structure, part of the 50S ribosomal subunit.

Functionally, this protein binds to the 23S rRNA, and is important in its secondary structure. It is located near the subunit interface in the base of the L7/L12 stalk, and near the tRNA binding site of the peptidyltransferase center. The sequence is that of Large ribosomal subunit protein uL6 from Streptococcus pneumoniae (strain ATCC 700669 / Spain 23F-1).